The sequence spans 790 residues: Ribonucleoside-diphosphate reductase large subunit (790 aa).

Substrate is bound by residues T208, S223–C224, G254, N436–E440, and P621–S625. The cysteines at positions 224 and 453 are disulfide-linked. The Proton acceptor role is filled by N436. The active-site Cysteine radical intermediate is C438. E440 acts as the Proton acceptor in catalysis.

Belongs to the ribonucleoside diphosphate reductase large chain family. As to quaternary structure, heterotetramer composed of a homodimer of the large subunit (R1) and a homodimer of the small subunit (R2). Larger multisubunit protein complex are also active, composed of (R1)n(R2)n.

The enzyme catalyses a 2'-deoxyribonucleoside 5'-diphosphate + [thioredoxin]-disulfide + H2O = a ribonucleoside 5'-diphosphate + [thioredoxin]-dithiol. In terms of biological role, ribonucleoside-diphosphate reductase holoenzyme provides the precursors necessary for viral DNA synthesis. Allows virus growth in non-dividing cells, as well as reactivation from latency in infected hosts. Catalyzes the biosynthesis of deoxyribonucleotides from the corresponding ribonucleotides. In Equus caballus (Horse), this protein is Ribonucleoside-diphosphate reductase large subunit.